We begin with the raw amino-acid sequence, 408 residues long: LL-diaminopimelate aminotransferase (408 aa).

Residues Y15 and G42 each coordinate substrate. Pyridoxal 5'-phosphate is bound by residues Y72, 108–109, Y132, N187, Y218, and 246–248; these read SK and SFS. Positions 109, 132, and 187 each coordinate substrate. The residue at position 249 (K249) is an N6-(pyridoxal phosphate)lysine. Residues R257 and N292 each coordinate pyridoxal 5'-phosphate. 2 residues coordinate substrate: N292 and R388.

Belongs to the class-I pyridoxal-phosphate-dependent aminotransferase family. LL-diaminopimelate aminotransferase subfamily. In terms of assembly, homodimer. It depends on pyridoxal 5'-phosphate as a cofactor.

The catalysed reaction is (2S,6S)-2,6-diaminopimelate + 2-oxoglutarate = (S)-2,3,4,5-tetrahydrodipicolinate + L-glutamate + H2O + H(+). It functions in the pathway amino-acid biosynthesis; L-lysine biosynthesis via DAP pathway; LL-2,6-diaminopimelate from (S)-tetrahydrodipicolinate (aminotransferase route): step 1/1. Functionally, involved in the synthesis of meso-diaminopimelate (m-DAP or DL-DAP), required for both lysine and peptidoglycan biosynthesis. Catalyzes the direct conversion of tetrahydrodipicolinate to LL-diaminopimelate. The protein is LL-diaminopimelate aminotransferase of Prochlorococcus marinus (strain MIT 9515).